The chain runs to 271 residues: Chorismate dehydratase (271 aa).

The protein belongs to the MqnA/MqnD family. MqnA subfamily.

The catalysed reaction is chorismate = 3-[(1-carboxyvinyl)-oxy]benzoate + H2O. It participates in quinol/quinone metabolism; menaquinone biosynthesis. Its function is as follows. Catalyzes the dehydration of chorismate into 3-[(1-carboxyvinyl)oxy]benzoate, a step in the biosynthesis of menaquinone (MK, vitamin K2). This Thermus thermophilus (strain ATCC 27634 / DSM 579 / HB8) protein is Chorismate dehydratase.